The primary structure comprises 472 residues: Carbohydrate sulfotransferase 3 (472 aa).

Topologically, residues 1-19 (MEKGLALPQDFRDLVHSLK) are cytoplasmic. Residues 20–38 (IRGRYVLFLAFVVIVFIFI) traverse the membrane as a helical; Signal-anchor for type II membrane protein segment. Over 39-472 (EKENKIISRV…LEERGTFWVT (434 aa)) the chain is Lumenal. 3 N-linked (GlcNAc...) asparagine glycosylation sites follow: Asn63, Asn74, and Asn96. Residue 135-141 (TRTGSSF) participates in 3'-phosphoadenylyl sulfate binding. Residue Asn250 is glycosylated (N-linked (GlcNAc...) asparagine). 295–303 (RDPRAVLAS) contacts 3'-phosphoadenylyl sulfate. 2 N-linked (GlcNAc...) asparagine glycosylation sites follow: Asn413 and Asn457.

Belongs to the sulfotransferase 1 family. Gal/GlcNAc/GalNAc subfamily. N-glycosylated. In terms of tissue distribution, widely expressed. Highly expressed in spleen, lung, eye and stomach. Constitutively expressed at low level during the mid- to late-gestation period. Expressed in the brain in a temporally controlled manner: peaks at 2 weeks after birth in the cerebellum, but at 3 weeks in the cerebrum. Localizes to stromal cells in the bone marrow, and stromal cells in the marginal zone and red pulp of the spleen, but the sense probe did not.

The protein resides in the golgi apparatus membrane. It carries out the reaction chondroitin beta-D-glucuronate + n 3'-phosphoadenylyl sulfate = chondroitin 6'-sulfate + n adenosine 3',5'-bisphosphate + n H(+). The catalysed reaction is 3'-phosphoadenylyl sulfate + keratan = adenosine 3',5'-bisphosphate + keratan 6'-sulfate.. Sulfotransferase that utilizes 3'-phospho-5'-adenylyl sulfate (PAPS) as sulfonate donor to catalyze the transfer of sulfate to position 6 of the N-acetylgalactosamine (GalNAc) residue of chondroitin. Chondroitin sulfate constitutes the predominant proteoglycan present in cartilage and is distributed on the surfaces of many cells and extracellular matrices. Catalyzes with a lower efficiency the sulfation of Gal residues of keratan sulfate, another glycosaminoglycan. Can also catalyze the sulfation of the Gal residues in sialyl N-acetyllactosamine (sialyl LacNAc) oligosaccharides. May play a role in the maintenance of naive T-lymphocytes in the spleen. The chain is Carbohydrate sulfotransferase 3 (Chst3) from Mus musculus (Mouse).